The following is a 224-amino-acid chain: Heme response regulator HssR (224 aa).

The Response regulatory domain occupies 3 to 116; sequence QCLVVDDDSR…ELIFRIRAVL (114 aa). The residue at position 52 (Asp52) is a 4-aspartylphosphate. The ompR/PhoB-type DNA-binding region spans 124 to 222; sequence NSEMTIGNLT…VRGQGYKVEN (99 aa).

Post-translationally, phosphorylated by HssS.

It is found in the cytoplasm. Functionally, member of the two-component regulatory system HssS/HssR involved in intracellular heme homeostasis and tempering of staphylococcal virulence. Phosphorylated HssR binds to a direct repeat sequence within hrtAB promoter and activates the expression of hrtAB, an efflux pump, in response to extracellular heme, hemin, hemoglobin or blood. The polypeptide is Heme response regulator HssR (hssR) (Staphylococcus aureus (strain bovine RF122 / ET3-1)).